Consider the following 481-residue polypeptide: 2-succinylbenzoate--CoA ligase (481 aa).

It belongs to the ATP-dependent AMP-binding enzyme family. MenE subfamily.

The catalysed reaction is 2-succinylbenzoate + ATP + CoA = 2-succinylbenzoyl-CoA + AMP + diphosphate. Its pathway is quinol/quinone metabolism; 1,4-dihydroxy-2-naphthoate biosynthesis; 1,4-dihydroxy-2-naphthoate from chorismate: step 5/7. The protein operates within quinol/quinone metabolism; menaquinone biosynthesis. Converts 2-succinylbenzoate (OSB) to 2-succinylbenzoyl-CoA (OSB-CoA). The polypeptide is 2-succinylbenzoate--CoA ligase (Bacillus mycoides (strain KBAB4) (Bacillus weihenstephanensis)).